The sequence spans 704 residues: MNRVLSKGPKGLNGLLRACPSNSGRSFLYHSTYNVSSRTFWSASRLRSEDSPSGSQPLKPDPNDGIGNNTSSASSQHTPWYLQEEALIEEPRQISSRDQIPELPENSPAILPVLLDYIFKDLGLDELRSIDLRGLETPPPIGANSIMIIGTARSVKHLNVSADRLCRWLRSTYKLTPYADGLLGRNELKIKLRRKARRARVASRAGTTVDEKDDGITTGWICVNAGVVENSPVGEQASRKVEGFGNIVGGTRVVVQMFTEEKRAEVDLEGLWLATIERDRRQKQVSIDTKSDAPHEEVRAPTPVQNSSSDHVFGPHCRSSTILPLEQRRGLHSKCRLLGPETEHNQEDGLDDGLDDGLDMSPDSISTPTDQLAANRTCDKEVDTDSLLEHLSGLPDEQVLSELGAGQEDRDSTPFLRRFYDALSQMSTEEAAVARVKLLCTAISRHHQGYSKESLWKAFMTCNYHTYPISDELGFEIVSALLTALPPHQKGPKATGVLPEADRELALRVLEHLSLRGTDVLNMKVFHLLYEAASHPTSFSGEEVIKDVTDATKDRPTSRVAKMIESLDIQFDPEDARKLMMSMFRNGDYDGFWNLWHKLPLYGSPRTSADYEMLFRLHADLRDECRARDCVSTWVPMMSREHPPIPLRGQVVQDIMHCLLIGEPAIDRMARAGSTSNLVLIWNDCKNIALGRGRRGSVERMNVV.

Residues 1-47 (MNRVLSKGPKGLNGLLRACPSNSGRSFLYHSTYNVSSRTFWSASRLR) constitute a mitochondrion transit peptide. Disordered stretches follow at residues 47-76 (RSED…ASSQ) and 283-313 (KQVS…DHVF). Positions 66 to 76 (IGNNTSSASSQ) are enriched in polar residues. Basic and acidic residues predominate over residues 289-299 (TKSDAPHEEVR).

Belongs to the ATP25 family.

It localises to the mitochondrion inner membrane. In terms of biological role, probable mitochondrial mRNA stabilization factor. This chain is ATPase synthesis protein 25, mitochondrial (atp25), found in Aspergillus fumigatus (strain ATCC MYA-4609 / CBS 101355 / FGSC A1100 / Af293) (Neosartorya fumigata).